The sequence spans 148 residues: Endoribonuclease YbeY (148 aa).

Zn(2+)-binding residues include H102, H106, and H112.

The protein belongs to the endoribonuclease YbeY family. It depends on Zn(2+) as a cofactor.

It localises to the cytoplasm. In terms of biological role, single strand-specific metallo-endoribonuclease involved in late-stage 70S ribosome quality control and in maturation of the 3' terminus of the 16S rRNA. The sequence is that of Endoribonuclease YbeY from Phytoplasma mali (strain AT).